Here is a 278-residue protein sequence, read N- to C-terminus: Poly(3-hydroxyoctanoate) depolymerase (278 aa).

The N-terminal stretch at 1–33 is a signal peptide; it reads MPLRTLLCGLLLAVCLGQHALAASRCSERPRTL.

It localises to the secreted. It carries out the reaction Hydrolyzes the polyester poly{oxycarbonyl[(R)-2-pentylethylene]} to oligomers.. Functionally, hydrolysis of poly(3-hydroxyoctanoic acid). The chain is Poly(3-hydroxyoctanoate) depolymerase (phaZ) from Pseudomonas fluorescens.